Reading from the N-terminus, the 156-residue chain is Small ribosomal subunit protein uS7 (156 aa).

Belongs to the universal ribosomal protein uS7 family. As to quaternary structure, part of the 30S ribosomal subunit. Contacts proteins S9 and S11.

Functionally, one of the primary rRNA binding proteins, it binds directly to 16S rRNA where it nucleates assembly of the head domain of the 30S subunit. Is located at the subunit interface close to the decoding center, probably blocks exit of the E-site tRNA. The sequence is that of Small ribosomal subunit protein uS7 from Nitrosomonas eutropha (strain DSM 101675 / C91 / Nm57).